The sequence spans 140 residues: 3-hydroxyacyl-[acyl-carrier-protein] dehydratase FabZ (140 aa).

H48 is a catalytic residue.

The protein belongs to the thioester dehydratase family. FabZ subfamily.

It localises to the cytoplasm. It carries out the reaction a (3R)-hydroxyacyl-[ACP] = a (2E)-enoyl-[ACP] + H2O. Its function is as follows. Involved in unsaturated fatty acids biosynthesis. Catalyzes the dehydration of short chain beta-hydroxyacyl-ACPs and long chain saturated and unsaturated beta-hydroxyacyl-ACPs. The polypeptide is 3-hydroxyacyl-[acyl-carrier-protein] dehydratase FabZ (Ligilactobacillus salivarius (strain UCC118) (Lactobacillus salivarius)).